The sequence spans 2173 residues: Mediator of DNA damage checkpoint protein 1 (2173 aa).

The segment covering 1-19 (MEDTQAIDWDVEEEEETEQ) has biased composition (acidic residues). Positions 1-22 (MEDTQAIDWDVEEEEETEQSSE) are disordered. The interaction with CHEK2 stretch occupies residues 1–150 (MEDTQAIDWD…SRGPLTVEET (150 aa)). The interaction with the MRN complex stretch occupies residues 2 to 222 (EDTQAIDWDV…PFAFNLNSDT (221 aa)). T4 is modified (phosphothreonine). An FHA domain is found at 54–105 (NVVGRMPDCSVALPFPSISKQHAEIEILAWDKAPILRDCGSLNGTQILRPPK). Position 108 is a phosphoserine (S108). Residues 145 to 570 (LTVEETPRVQ…PAKLLVVSLE (426 aa)) form a required for nuclear localization (NLS1) region. T146 bears the Phosphothreonine mark. Residues S168, S176, S198, and S220 each carry the phosphoserine modification. Residues 198-320 (SDEEGHSPVL…PPGRPAEVHL (123 aa)) form a disordered region. Phosphothreonine is present on T222. The span at 227-244 (GQQSATEEASSAARRGAT) shows a compositional bias: low complexity. Positions 259-276 (QLEKDQPSVKERDNDTKV) are enriched in basic and acidic residues. Residue S301 is modified to Phosphoserine. At T303 the chain carries Phosphothreonine. Residues 308-320 (DSRPPGRPAEVHL) are compositionally biased toward basic and acidic residues. S331 carries the phosphoserine modification. T333 is modified (phosphothreonine). Positions 359–383 (GTRGPGAPGLSHLQESQAGSDTDVE) are disordered. S374 and S378 each carry phosphoserine. Residue T380 is modified to Phosphothreonine. 3 positions are modified to phosphoserine: S396, S399, and S404. T406 bears the Phosphothreonine mark. At S413 the chain carries Phosphoserine. The disordered stretch occupies residues 444–515 (LQRSQTTTGR…SSPGIHLERS (72 aa)). T451 carries the phosphothreonine modification. S455 bears the Phosphoserine mark. Phosphothreonine is present on T457. Residues S487, S497, S500, S506, S507, and S515 each carry the phosphoserine modification. A Phosphothreonine modification is found at T525. Residue S592 is modified to Phosphoserine. K618 participates in a covalent cross-link: Glycyl lysine isopeptide (Lys-Gly) (interchain with G-Cter in SUMO1); alternate. A Glycyl lysine isopeptide (Lys-Gly) (interchain with G-Cter in SUMO2); alternate cross-link involves residue K618. S631 bears the Phosphoserine mark. 2 disordered regions span residues 652–697 (VDTD…EDPD) and 773–1770 (HLEA…TLRS). Residues 673-687 (GREREQHVGRTKDSE) show a composition bias toward basic and acidic residues. The segment covering 688-697 (DNCDDSEDPD) has biased composition (acidic residues). A phosphoserine mark is found at S782 and S795. The residue at position 814 (K814) is an N6-acetyllysine. Basic and acidic residues-rich tracts occupy residues 821–846 (ETAE…ERQT), 853–864 (ELTRGIQDREQK), 870–903 (DTQR…KEIQ), and 916–953 (AFER…RGEP). Phosphoserine is present on residues S957, S1000, S1035, S1070, and S1088. The segment covering 957–969 (SQDQKGQASSPTS) has biased composition (polar residues). The span at 1079–1090 (TIRKTGQDRSQE) shows a compositional bias: basic and acidic residues. Residues 1105-1115 (PKPKIITRKSS) show a composition bias toward basic residues. The segment covering 1131–1156 (PSTSTAQPVTPKPTSQATRSRTNRSS) has biased composition (polar residues). The interaction with the PRKDC complex stretch occupies residues 1150 to 1694 (SRTNRSSVKT…KNRSSVKTPE (545 aa)). The span at 1157–1169 (VKTPEPVVPTVPE) shows a compositional bias: low complexity. Residue T1159 is modified to Phosphothreonine. The segment covering 1171 to 1189 (QPSTSTDQPVASEPTSQAT) has biased composition (polar residues). T1200 carries the post-translational modification Phosphothreonine. Residue S1237 is modified to Phosphoserine. T1241, T1282, and T1304 each carry phosphothreonine. A compositionally biased stretch (low complexity) spans 1280 to 1292 (VKTPEPVVPTVPE). The segment covering 1294 to 1320 (QPSTSTDQPVTSEPTSQATRGRTNRSS) has biased composition (polar residues). The span at 1321–1333 (VKTPEPVVPTVPE) shows a compositional bias: low complexity. A compositionally biased stretch (polar residues) spans 1335–1353 (QPSTSTDQPVASEPTSQAT). The segment covering 1390–1402 (TSRTTRSRTNMSS) has biased composition (low complexity). Composition is skewed to polar residues over residues 1418 to 1434 (PSTS…TYQP), 1456 to 1487 (KLQS…SVKS), 1499 to 1527 (QPST…SSVK), and 1540 to 1559 (QPST…QATR). A phosphoserine mark is found at S1483 and S1484. Position 1486 is an N6-acetyllysine (K1486). 2 positions are modified to phosphothreonine: T1509 and T1550. Residues 1567–1578 (VKTPKIVVPTVP) show a composition bias toward low complexity. Positions 1581–1598 (QASTSTDQPVTSEPTSRT) are enriched in polar residues. T1617 and T1632 each carry phosphothreonine. The span at 1626-1639 (STDQPITPKPTSRA) shows a compositional bias: polar residues. At S1648 the chain carries Phosphoserine. 2 positions are modified to phosphothreonine: T1651 and T1673. Over residues 1664–1680 (PSTSRSQLVTPEPTSRA) the composition is skewed to polar residues. A Phosphoserine modification is found at S1688. T1692, T1714, T1748, and T1755 each carry phosphothreonine. Over residues 1705–1721 (PTTSTDQPVTPKPTSRA) the composition is skewed to polar residues. Positions 1761 to 1770 (QGSQSKTLRS) are enriched in polar residues. S1765 is subject to Phosphoserine. A Phosphothreonine modification is found at T1781. A required for nuclear localization (NLS2) region spans residues 1782 to 2173 (PEFQSPVTTD…VLSPLEMSST (392 aa)). Phosphoserine occurs at positions 1786 and 1795. Residues 1809-1971 (RATGNPGSLT…NRSLRRTKLN (163 aa)) form a disordered region. K1824 is covalently cross-linked (Glycyl lysine isopeptide (Lys-Gly) (interchain with G-Cter in SUMO2)). S1859 bears the Phosphoserine mark. K1874 is covalently cross-linked (Glycyl lysine isopeptide (Lys-Gly) (interchain with G-Cter in SUMO2)). Residue T1884 is modified to Phosphothreonine. Phosphoserine is present on S1904. Positions 1907-1920 (HQKQPQRGEVSQKT) are enriched in polar residues. Residue K1924 forms a Glycyl lysine isopeptide (Lys-Gly) (interchain with G-Cter in SUMO1); alternate linkage. K1924 is covalently cross-linked (Glycyl lysine isopeptide (Lys-Gly) (interchain with G-Cter in SUMO2); alternate). Residues 1931–1941 (AEKPGKEEDVM) are compositionally biased toward basic and acidic residues. Residue T1942 is modified to Phosphothreonine. BRCT domains are found at residues 1976 to 2054 (APKV…EYVV) and 2075 to 2166 (RERR…FVLS). Residue R2027 is modified to Omega-N-methylarginine.

In terms of assembly, homodimer. Interacts with H2AX, which requires phosphorylation of H2AX on 'Ser-139'. Interacts with the MRN complex, composed of MRE11, RAD50, and NBN. Interacts with CHEK2, which requires ATM-mediated phosphorylation of 'Thr-68' within the FHA domain of CHEK2. Interacts constitutively with the BRCA1-BARD1 complex, SMC1A and TP53BP1. Interacts with ATM and FANCD2, and these interactions are reduced upon DNA damage. Also interacts with the PRKDC complex, composed of XRCC6/KU70, XRCC5/KU80 and PRKDC/XRCC7. This interaction may be required for PRKDC autophosphorylation, which is essential for DNA double strand break (DSB) repair. When phosphorylated by ATM, interacts with RNF8 (via FHA domain). Interacts with CEP164. When phosphorylated, interacts with APTX (via FHA-like domain). Interacts (when phosphorylated) with TOPBP1; promoting TOPBP1 localization to DNA damage sites during mitosis. Interacts (when phosphorylated) with NBN; promoting NBN and MRN complex localization to DNA damage sites. In terms of processing, phosphorylated upon exposure to ionizing radiation (IR), ultraviolet radiation (UV), and hydroxyurea (HU). Phosphorylation in response to IR requires ATM, NBN, and possibly CHEK2. Also phosphorylated during the G2/M phase of the cell cycle and during activation of the mitotic spindle checkpoint. Phosphorylation at Thr-4 by ATM stabilizes and enhances homodimerization via the FHA domain. Phosphorylated at Ser-168 and Ser-198 by CK2 in response to DNA damage during mitosis, promoting interaction with TOPBP1. Phosphorylated by CK2 in response to DNA damage, promoting interaction with NBN and recruitment of the MRN complex to DNA damage sites. Sumoylation at Lys-1924 by PIAS4 following DNA damage promotes ubiquitin-mediated degradation. Post-translationally, ubiquitinated by RNF4, leading to proteasomal degradation; undergoes 'Lys-48'-linked polyubiquitination.

It is found in the nucleus. The protein localises to the chromosome. Histone reader protein required for checkpoint-mediated cell cycle arrest in response to DNA damage within both the S phase and G2/M phases of the cell cycle. Specifically recognizes and binds histone H2AX phosphorylated at 'Ser-139', a marker of DNA damage, serving as a scaffold for the recruitment of DNA repair and signal transduction proteins to discrete foci of DNA damage sites. Also required for downstream events subsequent to the recruitment of these proteins. These include phosphorylation and activation of the ATM, CHEK1 and CHEK2 kinases, and stabilization of TP53/p53 and apoptosis. ATM and CHEK2 may also be activated independently by a parallel pathway mediated by TP53BP1. Required for chromosomal stability during mitosis by promoting recruitment of TOPBP1 to DNA double strand breaks (DSBs): TOPBP1 forms filamentous assemblies that bridge MDC1 and tether broken chromosomes during mitosis. Required for the repair of DSBs via homologous recombination by promoting recruitment of NBN component of the MRN complex to DSBs. This is Mediator of DNA damage checkpoint protein 1 (MDC1) from Macaca mulatta (Rhesus macaque).